The sequence spans 337 residues: MNPSTNVDLTPFNTLALPGRAARYQKVTAPEALTAPELVKEKRFILGGGSNLVLTGDFDGLLLHMAIPGKRLVKEDAEAWFIEAGAGENWHDFVQWTLTRGWPGLENLSLIPGTVGAAPIQNIGAYGLEVADCLHSVTGWDFEKKALLTIDRDDCRFAYRDSLFKQQGWHLNGRIAITSVIFRLAKAWQPNMRYADIAQELATRKIAAPSAQDIATAVIAVRQRKLPDPAVTPNAGSFFHNPVVEAIQAEALADAYPTLPRYPQPDGRVKLAAGWLIEQAGWKGKALGPVGMYEKQALVLVNRGGATGQDVQRTMAAVQAAVREKFAVELTPEPIFL.

The FAD-binding PCMH-type domain maps to 16 to 187 (ALPGRAARYQ…TSVIFRLAKA (172 aa)). Residue Arg160 is part of the active site. Ser237 serves as the catalytic Proton donor. Glu333 is an active-site residue.

The cofactor is FAD.

It localises to the cytoplasm. The catalysed reaction is UDP-N-acetyl-alpha-D-muramate + NADP(+) = UDP-N-acetyl-3-O-(1-carboxyvinyl)-alpha-D-glucosamine + NADPH + H(+). The protein operates within cell wall biogenesis; peptidoglycan biosynthesis. Functionally, cell wall formation. The polypeptide is UDP-N-acetylenolpyruvoylglucosamine reductase (Dechloromonas aromatica (strain RCB)).